The following is a 461-amino-acid chain: MSTLNVPKETMSRKDPEKFFTIVEKLGEGSYGSVYKAINISTGIVVAIKKVSVDNDLEDMEKEISFMKQCKSPYIVTYYASFRKENEVWIVMEHCGAGSVCDAMKITDKTLSEDQIAVVSRDVLQGLAYLHSVRKIHRDIKAGNILMNHKGESKLADFGVSGQLSDTMAKRQTVIGTPFWMAPEVIQEIGYDYKADIWSYGITCIEMAESKPPLFNVHPMRVIFMIPNPSRPPPKLTEPEKWSPEFNDFLAKCLTRKPELRPSAEELLKHPFITKAKSHSLLVPLIDEQDIIINEKGREVALGIEQRDEEEEDEDEDSEDSDDNRGTMVRAKPRSMQNSGGEDNDEEYDTGTMVITDNKNSYDTVVFNNDDEDSGTMKLKNTMPSNKKNFVPDYMNQFKKSDDDVTNVPLSDKYSSYSLEELKKMLAELEIEREKEVQKTLEKFSINRQALLAVIDEKKSK.

A Protein kinase domain is found at 20–273 (FTIVEKLGEG…AEELLKHPFI (254 aa)). ATP is bound by residues 26–34 (LGEGSYGSV) and Lys-49. The active-site Proton acceptor is Asp-139. Position 173 is a phosphothreonine; by autocatalysis (Thr-173). Disordered stretches follow at residues 303–349 (GIEQ…EEYD) and 369–388 (NDDEDSGTMKLKNTMPSNKK). The span at 307-322 (RDEEEEDEDEDSEDSD) shows a compositional bias: acidic residues. In terms of domain architecture, SARAH spans 411-458 (SDKYSSYSLEELKKMLAELEIEREKEVQKTLEKFSINRQALLAVIDEK).

This sequence belongs to the protein kinase superfamily. STE Ser/Thr protein kinase family. STE20 subfamily. Mn(2+) serves as cofactor. Undergoes autophosphorylation in the catalytic domain.

The protein resides in the cytoplasm. It localises to the cytosol. It carries out the reaction L-seryl-[protein] + ATP = O-phospho-L-seryl-[protein] + ADP + H(+). It catalyses the reaction L-threonyl-[protein] + ATP = O-phospho-L-threonyl-[protein] + ADP + H(+). Its function is as follows. Regulates both cAMP signaling during early development and the stress response. Functions as an activator of adenylylcyclase. The sequence is that of Serine/threonine-protein kinase 4 homolog A (krsA) from Dictyostelium discoideum (Social amoeba).